Consider the following 632-residue polypeptide: tRNA-guanine(15) transglycosylase (632 aa).

Residue D86 is the Nucleophile of the active site. Substrate contacts are provided by D121 and G186. Residues 553 to 628 (NLRVFVKNES…IAVKIHEGRD (76 aa)) enclose the PUA domain.

It belongs to the archaeosine tRNA-ribosyltransferase family. The cofactor is Zn(2+).

The enzyme catalyses guanosine(15) in tRNA + 7-cyano-7-deazaguanine = 7-cyano-7-carbaguanosine(15) in tRNA + guanine. The protein operates within tRNA modification; archaeosine-tRNA biosynthesis. Exchanges the guanine residue with 7-cyano-7-deazaguanine (preQ0) at position 15 in the dihydrouridine loop (D-loop) of archaeal tRNAs. This chain is tRNA-guanine(15) transglycosylase, found in Thermoplasma volcanium (strain ATCC 51530 / DSM 4299 / JCM 9571 / NBRC 15438 / GSS1).